A 148-amino-acid polypeptide reads, in one-letter code: Large ribosomal subunit protein uL15 (148 aa).

The tract at residues 1–57 is disordered; sequence MRLNDVKPQKGSKKRRRRVGRGISAGQGASAGLGMRGQKSRSGSGTRPGFEGGQQPL. Positions 10–20 are enriched in basic residues; that stretch reads KGSKKRRRRVG. Gly residues predominate over residues 23–35; the sequence is ISAGQGASAGLGM.

It belongs to the universal ribosomal protein uL15 family. In terms of assembly, part of the 50S ribosomal subunit.

In terms of biological role, binds to the 23S rRNA. The chain is Large ribosomal subunit protein uL15 from Trichormus variabilis (strain ATCC 29413 / PCC 7937) (Anabaena variabilis).